The following is a 355-amino-acid chain: SH3 domain-containing protein Dlish (355 aa).

3 consecutive SH3 domains span residues 57–117 (SPDS…PCNT), 183–243 (EPSG…PADS), and 287–352 (YHGT…PPAM).

Interacts with dachs (via C-terminus); the interaction is direct. Interacts (via N-terminus including SH3 domain 1) with palmitoyltransferase app; this leads to palmitoylation of Dlish by app. Also interacts with dco, ft, ft-regulated E3 ubiquitin ligase Fbxl7, F-box protein slmb and SCF E3 ubiquitin-protein ligase complex component Cul1. In terms of processing, palmitoylated by app.

It localises to the cytoplasm. It is found in the cell cortex. In terms of biological role, required for the apical cell cortex localization, total cellular level and full activity of dachs. The polypeptide is SH3 domain-containing protein Dlish (Drosophila melanogaster (Fruit fly)).